We begin with the raw amino-acid sequence, 71 residues long: Small ribosomal subunit protein bS21 (71 aa).

Residues 40-71 (KPTQVRKRKQAAAVKRHMKRLNREQQRRQRPY) form a disordered region. The segment covering 43-59 (QVRKRKQAAAVKRHMKR) has biased composition (basic residues). The span at 60 to 71 (LNREQQRRQRPY) shows a compositional bias: basic and acidic residues.

It belongs to the bacterial ribosomal protein bS21 family.

This is Small ribosomal subunit protein bS21 from Halorhodospira halophila (strain DSM 244 / SL1) (Ectothiorhodospira halophila (strain DSM 244 / SL1)).